We begin with the raw amino-acid sequence, 445 residues long: Histidine--tRNA ligase (445 aa).

The protein belongs to the class-II aminoacyl-tRNA synthetase family. Homodimer.

The protein resides in the cytoplasm. It catalyses the reaction tRNA(His) + L-histidine + ATP = L-histidyl-tRNA(His) + AMP + diphosphate + H(+). In Mycoplasma mobile (strain ATCC 43663 / 163K / NCTC 11711) (Mesomycoplasma mobile), this protein is Histidine--tRNA ligase.